Consider the following 99-residue polypeptide: MSENNAEVQKITLIDESGDEALYEVLFTFHSDEYNKDYILLVPEGIEDDEEVDIQAYIFNPDENGDATEEELIQIEDDKEWDMVEEVLNTFLEDDSNFN.

The protein belongs to the UPF0473 family.

The chain is UPF0473 protein LEUM_0559 from Leuconostoc mesenteroides subsp. mesenteroides (strain ATCC 8293 / DSM 20343 / BCRC 11652 / CCM 1803 / JCM 6124 / NCDO 523 / NBRC 100496 / NCIMB 8023 / NCTC 12954 / NRRL B-1118 / 37Y).